The primary structure comprises 544 residues: Exodeoxyribonuclease 7 large subunit (544 aa).

The disordered stretch occupies residues 522-544 (PETPPKSRKADNPPEPPEQTSFL).

It belongs to the XseA family. As to quaternary structure, heterooligomer composed of large and small subunits.

The protein localises to the cytoplasm. It catalyses the reaction Exonucleolytic cleavage in either 5'- to 3'- or 3'- to 5'-direction to yield nucleoside 5'-phosphates.. Bidirectionally degrades single-stranded DNA into large acid-insoluble oligonucleotides, which are then degraded further into small acid-soluble oligonucleotides. This Zymomonas mobilis subsp. mobilis (strain ATCC 31821 / ZM4 / CP4) protein is Exodeoxyribonuclease 7 large subunit.